A 368-amino-acid chain; its full sequence is L-cysteine desulfhydrase Cds1 (368 aa).

Lysine 67 is modified (N6-(pyridoxal phosphate)lysine). Pyridoxal 5'-phosphate contacts are provided by residues 203–207 and serine 299; that span reads GTGGT.

This sequence belongs to the cysteine synthase/cystathionine beta-synthase family. Cds1 subfamily. Pyridoxal 5'-phosphate is required as a cofactor.

Its subcellular location is the cytoplasm. The catalysed reaction is L-cysteine + H2O = hydrogen sulfide + pyruvate + NH4(+) + H(+). A cysteine desulfhydrase that generates hydrogen sulfide, H(2)S. The H(2)S produced by this enzyme stimulates respiration in M.tuberculosis, mediated primarily via cytochrome bd with a lesser contribution from cytochrome bc1/aa3. H(2)S modulates the balance between respiration and glycolysis, and also contributes to redox homeostasis. Probably eliminates toxic levels of Cys (which can induce oxidative stress). This Mycobacterium tuberculosis (strain ATCC 25177 / H37Ra) protein is L-cysteine desulfhydrase Cds1.